The primary structure comprises 50 residues: Large ribosomal subunit protein bL33 (50 aa).

It belongs to the bacterial ribosomal protein bL33 family.

This chain is Large ribosomal subunit protein bL33, found in Endomicrobium trichonymphae.